The sequence spans 238 residues: Ribonuclease PH (238 aa).

Phosphate is bound by residues Arg-86 and 124–126; that span reads GTR.

It belongs to the RNase PH family. Homohexameric ring arranged as a trimer of dimers.

It carries out the reaction tRNA(n+1) + phosphate = tRNA(n) + a ribonucleoside 5'-diphosphate. Functionally, phosphorolytic 3'-5' exoribonuclease that plays an important role in tRNA 3'-end maturation. Removes nucleotide residues following the 3'-CCA terminus of tRNAs; can also add nucleotides to the ends of RNA molecules by using nucleoside diphosphates as substrates, but this may not be physiologically important. Probably plays a role in initiation of 16S rRNA degradation (leading to ribosome degradation) during starvation. The chain is Ribonuclease PH from Geotalea daltonii (strain DSM 22248 / JCM 15807 / FRC-32) (Geobacter daltonii).